We begin with the raw amino-acid sequence, 398 residues long: Cytochrome b (398 aa).

A run of 4 helical transmembrane segments spans residues 38-58 (FGPLAGICLVIQIVTGVFLAM), 82-104 (WFLRYMHANGASMFLIVVHFHMF), 119-139 (VRCSGVVIFLLMIVTAFIGYV), and 185-205 (FFSLHYLLPFLLVGASILHLG). Heme b-binding residues include His-88 and His-102. Residues His-189 and His-203 each contribute to the heme b site. His-208 is an a ubiquinone binding site. Helical transmembrane passes span 231 to 251 (YYVKDLVGWVAFAIFSSIFIF), 295 to 316 (AGGVAAIAPVFICLLALPFLNQ), 328 to 348 (IYHIIYLLFLADRLLLGWIGC), and 355 to 374 (FVTIGQISPFVFFLFFAIMP).

The protein belongs to the cytochrome b family. The main subunits of complex b-c1 are: cytochrome b, cytochrome c1 and the Rieske protein. Requires heme b as cofactor.

The protein localises to the mitochondrion inner membrane. Component of the ubiquinol-cytochrome c reductase complex (complex III or cytochrome b-c1 complex) that is part of the mitochondrial respiratory chain. The b-c1 complex mediates electron transfer from ubiquinol to cytochrome c. Contributes to the generation of a proton gradient across the mitochondrial membrane that is then used for ATP synthesis. The chain is Cytochrome b (MT-CYB) from Daucus carota (Wild carrot).